Reading from the N-terminus, the 863-residue chain is Bifunctional uridylyltransferase/uridylyl-removing enzyme (863 aa).

Positions 1–328 are uridylyltransferase; sequence MLFSPTLSSP…PSNQDTVIDQ (328 aa). The interval 329 to 687 is uridylyl-removing; it reads LDDDFQLINQ…ISNRFSLGGT (359 aa). The 123-residue stretch at 446–568 folds into the HD domain; it reads VDEHTLRVML…VQNQVRLDYL (123 aa). ACT domains lie at 688 to 772 and 794 to 863; these read EVFI…PNRQ and QMEL…RNIG.

The protein belongs to the GlnD family. Requires Mg(2+) as cofactor.

It carries out the reaction [protein-PII]-L-tyrosine + UTP = [protein-PII]-uridylyl-L-tyrosine + diphosphate. The enzyme catalyses [protein-PII]-uridylyl-L-tyrosine + H2O = [protein-PII]-L-tyrosine + UMP + H(+). Uridylyltransferase (UTase) activity is inhibited by glutamine, while glutamine activates uridylyl-removing (UR) activity. Functionally, modifies, by uridylylation and deuridylylation, the PII regulatory proteins (GlnB and homologs), in response to the nitrogen status of the cell that GlnD senses through the glutamine level. Under low glutamine levels, catalyzes the conversion of the PII proteins and UTP to PII-UMP and PPi, while under higher glutamine levels, GlnD hydrolyzes PII-UMP to PII and UMP (deuridylylation). Thus, controls uridylylation state and activity of the PII proteins, and plays an important role in the regulation of nitrogen assimilation and metabolism. This Haemophilus influenzae (strain 86-028NP) protein is Bifunctional uridylyltransferase/uridylyl-removing enzyme.